The primary structure comprises 1084 residues: Probable sucrose-phosphate synthase 1 (1084 aa).

The span at 25–46 (GGGGGGGGGGGGGGGGGGGGGV) shows a compositional bias: gly residues. The tract at residues 25–61 (GGGGGGGGGGGGGGGGGGGGGVDPRSPAAGAASPRGP) is disordered. Residues 48-61 (PRSPAAGAASPRGP) are compositionally biased toward low complexity.

The protein belongs to the glycosyltransferase 1 family. In terms of assembly, homodimer or homotetramer. In terms of tissue distribution, expressed in leaves mesophyll cells, scutellum of germinating seedlings and pollen of immature inflorescences.

The enzyme catalyses beta-D-fructose 6-phosphate + UDP-alpha-D-glucose = sucrose 6(F)-phosphate + UDP + H(+). It participates in glycan biosynthesis; sucrose biosynthesis; sucrose from D-fructose 6-phosphate and UDP-alpha-D-glucose: step 1/2. Activity is regulated by phosphorylation and moderated by concentration of metabolites and light. Functionally, plays a role in photosynthetic sucrose synthesis by catalyzing the rate-limiting step of sucrose biosynthesis from UDP-glucose and fructose- 6-phosphate. Involved in the regulation of carbon partitioning in the leaves of plants. May regulate the synthesis of sucrose and therefore play a major role as a limiting factor in the export of photoassimilates out of the leaf. Plays a role for sucrose availability that is essential for plant growth and fiber elongation. The polypeptide is Probable sucrose-phosphate synthase 1 (SPS1) (Oryza sativa subsp. indica (Rice)).